The following is a 1224-amino-acid chain: WD repeat-containing protein 11 (1224 aa).

WD repeat units lie at residues 59–108 and 111–154; these read KHKA…AQCE and EHAK…KLWK. Phosphoserine is present on residues Ser205 and Ser209. Residues 354–393 form a WD 3 repeat; sequence KTVRPFSMVCCPVNENAAALVVSDGRVMIWELKSAVCNRN. Phosphoserine is present on residues Ser402 and Ser406. 6 WD repeats span residues 471–510, 566–605, 708–745, 747–787, 793–831, and 893–940; these read RMCP…LHKE, NDES…LLRE, GSMG…SRGI, THRS…MVSS, NVTF…ACFR, and SLSN…HSLS.

As to quaternary structure, component of the complex WDR11 composed of C17orf75, FAM91A1 and WDR11; FAM91A1 and WDR11 are required for proper location of the complex. Interacts (via the N-terminal and the central portion of the protein) with EMX1. Interacts with GLI3; the interaction associateS EMX1 with GLI3. Interacts with TBC1D23; this interaction may be indirect and recruits TBC1D23 to AP-1-derived vesicles. In terms of tissue distribution, ubiquitous.

The protein resides in the cytoplasm. Its subcellular location is the cytoskeleton. It localises to the cilium basal body. The protein localises to the nucleus. It is found in the cilium axoneme. The protein resides in the cytoplasmic vesicle. Its subcellular location is the golgi apparatus. It localises to the trans-Golgi network. Functionally, involved in the Hedgehog (Hh) signaling pathway, is essential for normal ciliogenesis. Regulates the proteolytic processing of GLI3 and cooperates with the transcription factor EMX1 in the induction of downstream Hh pathway gene expression and gonadotropin-releasing hormone production. WDR11 complex facilitates the tethering of Adaptor protein-1 complex (AP-1)-derived vesicles. WDR11 complex acts together with TBC1D23 to facilitate the golgin-mediated capture of vesicles generated using AP-1. The polypeptide is WD repeat-containing protein 11 (WDR11) (Homo sapiens (Human)).